Reading from the N-terminus, the 143-residue chain is Small ribosomal subunit protein eS19x (143 aa).

It belongs to the eukaryotic ribosomal protein eS19 family.

This Arabidopsis thaliana (Mouse-ear cress) protein is Small ribosomal subunit protein eS19x (RPS19C).